A 574-amino-acid polypeptide reads, in one-letter code: K(+)/H(+) antiporter NhaP2 (574 aa).

13 helical membrane passes run I6–V26, I34–L54, Y58–M78, V87–T107, V109–V129, I173–I193, F196–L216, L219–S239, L242–T262, V271–L291, I299–V319, W335–M355, and L359–V379. Residues S405 to Q486 enclose the RCK C-terminal domain.

It belongs to the monovalent cation:proton antiporter 1 (CPA1) transporter (TC 2.A.36) family. NhaP2 subfamily.

It localises to the cell inner membrane. The enzyme catalyses K(+)(in) + H(+)(out) = K(+)(out) + H(+)(in). Functionally, k(+)/H(+) antiporter that extrudes potassium in exchange for external protons and maintains the internal concentration of potassium under toxic levels. The polypeptide is K(+)/H(+) antiporter NhaP2 (Shewanella sp. (strain MR-7)).